The following is a 216-amino-acid chain: Adenylate kinase (216 aa).

10-15 contacts ATP; that stretch reads GAGKGT. An NMP region spans residues 30-59; that stretch reads STGDMLRAAVSAQTEVGKRAKAVMDAGKLV. AMP is bound by residues Thr31, Arg36, 57–59, 85–88, and Gln92; these read KLV and GFPR. Residues 126–163 form an LID region; that stretch reads GRYTCANCGTGYHDENLKPKVEGVCDKCGSTHFKRRPD. ATP is bound at residue Arg127. The Zn(2+) site is built by Cys130, Cys133, Cys150, and Cys153. 2 residues coordinate AMP: Arg160 and Arg172. Ala200 serves as a coordination point for ATP.

Belongs to the adenylate kinase family. Monomer.

Its subcellular location is the cytoplasm. It carries out the reaction AMP + ATP = 2 ADP. It participates in purine metabolism; AMP biosynthesis via salvage pathway; AMP from ADP: step 1/1. Its function is as follows. Catalyzes the reversible transfer of the terminal phosphate group between ATP and AMP. Plays an important role in cellular energy homeostasis and in adenine nucleotide metabolism. The polypeptide is Adenylate kinase (Allorhizobium ampelinum (strain ATCC BAA-846 / DSM 112012 / S4) (Agrobacterium vitis (strain S4))).